The sequence spans 741 residues: MAVLDTDLDHILPSSVLPPFWAKLVVGSVAIVCFARSYDGDFVFDDSEAIVNNKDLQAETPLGDLWHHDFWGSRLSSNTSHKSYRPLTVLTFRINYYLSGGFHPVGFHVVNILLHSGISVLMVDVFSVLFGGLQYTSKGRRLHLAPRASLLAALLFAVHPVHTECVAGVVGRADLLCALFFLLSFLGYCKAFRESNKEGAHSSTFWVLLSIFLGAVAMLCKEQGITVLGLNAVFDILVIGKFNVLEIVQKVLHKDKSLENLGMLRNGGLLFRMTLLTSGGAGMLYVRWRIMGTGPPAFTEVDNPASFADSMLVRAVNYNYYYSLNAWLLLCPWWLCFDWSMGCIPLIKSISDWRVIALAALWFCLIGLICQALCSEDGHKRRILTLGLGFLVIPFLPASNLFFRVGFVVAERVLYLPSVGYCVLLTFGFGALSKHTKKKKLIAAVVLGILFINTLRCVLRSGEWRSEEQLFRSALSVCPLNAKVHYNIGKNLADKGNQTAAIRYYREAVRLNPKYVHAMNNLGNILKERNELQEAEELLSLAVQIQPDFAAAWMNLGIVQNSLKRFEAAEQSYRTAIKHRRKYPDCYYNLGRLYADLNRHVDALNAWRNATVLKPEHSLAWNNMIILLDNTGNLAQAEAVGREALELIPNDHSLMFSLANVLGKSQKYKESEALFLKAIKANPNAASYHGNLAVLYHRWGHLDLAKKHYEISLQLDPTASGTKENYGLLRRKLELMQKKAV.

Over 1–14 (MAVLDTDLDHILPS) the chain is Cytoplasmic. The chain crosses the membrane as a helical span at residues 15 to 35 (SVLPPFWAKLVVGSVAIVCFA). At 36–111 (RSYDGDFVFD…FHPVGFHVVN (76 aa)) the chain is on the extracellular side. A glycan (N-linked (GlcNAc...) asparagine) is linked at Asn-78. A helical transmembrane segment spans residues 112 to 132 (ILLHSGISVLMVDVFSVLFGG). Residues 133–141 (LQYTSKGRR) lie on the Cytoplasmic side of the membrane. The helical transmembrane segment at 142-162 (LHLAPRASLLAALLFAVHPVH) threads the bilayer. Topologically, residues 163–165 (TEC) are extracellular. Residues 166-186 (VAGVVGRADLLCALFFLLSFL) form a helical membrane-spanning segment. Residues 187-198 (GYCKAFRESNKE) are Cytoplasmic-facing. The helical transmembrane segment at 199–219 (GAHSSTFWVLLSIFLGAVAML) threads the bilayer. Residues 220 to 224 (CKEQG) lie on the Extracellular side of the membrane. Residues 225–245 (ITVLGLNAVFDILVIGKFNVL) traverse the membrane as a helical segment. At 246 to 268 (EIVQKVLHKDKSLENLGMLRNGG) the chain is on the cytoplasmic side. A helical transmembrane segment spans residues 269-288 (LLFRMTLLTSGGAGMLYVRW). Residues 289-354 (RIMGTGPPAF…PLIKSISDWR (66 aa)) are Extracellular-facing. Residues 355 to 375 (VIALAALWFCLIGLICQALCS) form a helical membrane-spanning segment. The Cytoplasmic segment spans residues 376–382 (EDGHKRR). Residues 383 to 403 (ILTLGLGFLVIPFLPASNLFF) traverse the membrane as a helical segment. Topologically, residues 404–412 (RVGFVVAER) are extracellular. Residues 413–433 (VLYLPSVGYCVLLTFGFGALS) form a helical membrane-spanning segment. Topologically, residues 434–440 (KHTKKKK) are cytoplasmic. A helical membrane pass occupies residues 441-461 (LIAAVVLGILFINTLRCVLRS). The Extracellular segment spans residues 462–741 (GEWRSEEQLF…KLELMQKKAV (280 aa)). TPR repeat units lie at residues 482–515 (AKVH…NPKY), 516–549 (VHAM…QPDF), 550–583 (AAAW…RRKY), 584–617 (PDCY…KPEH), 618–651 (SLAW…IPND), 652–685 (HSLM…NPNA), and 686–719 (ASYH…DPTA). A glycan (N-linked (GlcNAc...) asparagine) is linked at Asn-497. N-linked (GlcNAc...) asparagine glycosylation occurs at Asn-609.

The protein belongs to the TMTC family.

It localises to the membrane. The protein localises to the endoplasmic reticulum. It catalyses the reaction a di-trans,poly-cis-dolichyl beta-D-mannosyl phosphate + L-seryl-[protein] = 3-O-(alpha-D-mannosyl)-L-seryl-[protein] + a di-trans,poly-cis-dolichyl phosphate + H(+). The enzyme catalyses a di-trans,poly-cis-dolichyl beta-D-mannosyl phosphate + L-threonyl-[protein] = 3-O-(alpha-D-mannosyl)-L-threonyl-[protein] + a di-trans,poly-cis-dolichyl phosphate + H(+). It functions in the pathway protein modification; protein glycosylation. Its function is as follows. Transfers mannosyl residues to the hydroxyl group of serine or threonine residues. The 4 members of the TMTC family are O-mannosyl-transferases dedicated primarily to the cadherin superfamily, each member seems to have a distinct role in decorating the cadherin domains with O-linked mannose glycans at specific regions. Also acts as O-mannosyl-transferase on other proteins such as PDIA3. This is Protein O-mannosyl-transferase TMTC4 from Homo sapiens (Human).